We begin with the raw amino-acid sequence, 159 residues long: 2-C-methyl-D-erythritol 2,4-cyclodiphosphate synthase (159 aa).

Residues aspartate 10 and histidine 12 each contribute to the a divalent metal cation site. Residues 10–12 (DVH) and 36–37 (HS) contribute to the 4-CDP-2-C-methyl-D-erythritol 2-phosphate site. Histidine 44 provides a ligand contact to a divalent metal cation. Residues 58 to 60 (DIG), 63 to 67 (FPDTD), 102 to 108 (AQAPKMA), 134 to 137 (TTTE), phenylalanine 141, and arginine 144 each bind 4-CDP-2-C-methyl-D-erythritol 2-phosphate.

The protein belongs to the IspF family. In terms of assembly, homotrimer. A divalent metal cation is required as a cofactor.

The enzyme catalyses 4-CDP-2-C-methyl-D-erythritol 2-phosphate = 2-C-methyl-D-erythritol 2,4-cyclic diphosphate + CMP. Its pathway is isoprenoid biosynthesis; isopentenyl diphosphate biosynthesis via DXP pathway; isopentenyl diphosphate from 1-deoxy-D-xylulose 5-phosphate: step 4/6. Its function is as follows. Involved in the biosynthesis of isopentenyl diphosphate (IPP) and dimethylallyl diphosphate (DMAPP), two major building blocks of isoprenoid compounds. Catalyzes the conversion of 4-diphosphocytidyl-2-C-methyl-D-erythritol 2-phosphate (CDP-ME2P) to 2-C-methyl-D-erythritol 2,4-cyclodiphosphate (ME-CPP) with a corresponding release of cytidine 5-monophosphate (CMP). This chain is 2-C-methyl-D-erythritol 2,4-cyclodiphosphate synthase, found in Shewanella frigidimarina (strain NCIMB 400).